The primary structure comprises 367 residues: 3-dehydroquinate synthase (367 aa).

NAD(+) contacts are provided by residues 69–74, 103–107, 127–128, Lys-140, Lys-149, and 167–170; these read DGESHK, GVIGD, TT, and TLAT. Glu-182, His-245, and His-262 together coordinate Zn(2+).

It belongs to the sugar phosphate cyclases superfamily. Dehydroquinate synthase family. The cofactor is Co(2+). Zn(2+) serves as cofactor. Requires NAD(+) as cofactor.

The protein resides in the cytoplasm. The catalysed reaction is 7-phospho-2-dehydro-3-deoxy-D-arabino-heptonate = 3-dehydroquinate + phosphate. It functions in the pathway metabolic intermediate biosynthesis; chorismate biosynthesis; chorismate from D-erythrose 4-phosphate and phosphoenolpyruvate: step 2/7. In terms of biological role, catalyzes the conversion of 3-deoxy-D-arabino-heptulosonate 7-phosphate (DAHP) to dehydroquinate (DHQ). The protein is 3-dehydroquinate synthase of Stutzerimonas stutzeri (strain A1501) (Pseudomonas stutzeri).